The chain runs to 247 residues: Small ribosomal subunit protein uS2 (247 aa).

The protein belongs to the universal ribosomal protein uS2 family.

In Cupriavidus pinatubonensis (strain JMP 134 / LMG 1197) (Cupriavidus necator (strain JMP 134)), this protein is Small ribosomal subunit protein uS2.